Here is a 449-residue protein sequence, read N- to C-terminus: MARQYFGTDGIRGRVNTSPMTAETALRLSIAAARTFAPEGGREVVIGRDTRRSGDMIEAALVAGFTSMGITPVLLGVVPTPAVALMARETGAALGVMVSASHNKFEDNGLKLFSPEGIKFDDDTEEALEMAMGTALKGEYAAPAEITLPRTMAGTSNRYVRRCLDTLAGGQDFSKLKVVLDCAHGAGFETGPAALTELGAQLTVIGAAPDGININAGFGSTATGALKAAVLETGAHIGIALDGDADRLIVIDETGTEADGDQVMGLIAGEMHRTGRLKGGGMVATVMSNMGLSEYLKTEGLTLARTKVGDRYVGEHMRAHGFNLGGEQSGHIILSDVSTTGDGLLAGLQILSVLAARGGKASDMLRVFTPAPQELINIRYSGANPLESDRVKTALAEAEGLLGDRGRMVVRKSGTEPLIRVMAEALDEDLMLKALHHAANAVTAAAGNS.

The Phosphoserine intermediate role is filled by S101. Mg(2+) is bound by residues S101, D242, D244, and D246. At S101 the chain carries Phosphoserine.

It belongs to the phosphohexose mutase family. It depends on Mg(2+) as a cofactor. In terms of processing, activated by phosphorylation.

It catalyses the reaction alpha-D-glucosamine 1-phosphate = D-glucosamine 6-phosphate. In terms of biological role, catalyzes the conversion of glucosamine-6-phosphate to glucosamine-1-phosphate. This chain is Phosphoglucosamine mutase, found in Hyphomonas neptunium (strain ATCC 15444).